A 164-amino-acid chain; its full sequence is MKGVKFMKEIILAGGCFWGVEEYFSRIYGVVDTKVGYVNGVTKNPSYEEVCNGNTGYAEGCYIKFDESIIGLKRILDKFWDIIDPTILNRQGPDVGHQYRTGIYYYDKEDLDDILKSKDEISKKYDKPIVTEVEKVTYFYLAEEYHQKYLKKNPNGYCHINLDN.

Cys16 is a catalytic residue.

The protein belongs to the MsrA Met sulfoxide reductase family.

It carries out the reaction L-methionyl-[protein] + [thioredoxin]-disulfide + H2O = L-methionyl-(S)-S-oxide-[protein] + [thioredoxin]-dithiol. The enzyme catalyses [thioredoxin]-disulfide + L-methionine + H2O = L-methionine (S)-S-oxide + [thioredoxin]-dithiol. Has an important function as a repair enzyme for proteins that have been inactivated by oxidation. Catalyzes the reversible oxidation-reduction of methionine sulfoxide in proteins to methionine. This Clostridium tetani (strain Massachusetts / E88) protein is Peptide methionine sulfoxide reductase MsrA.